A 188-amino-acid polypeptide reads, in one-letter code: Putative manganese efflux pump MntP (188 aa).

6 consecutive transmembrane segments (helical) span residues 3-23 (WLTI…VALA), 39-59 (LGFH…LLGM), 65-85 (ISAY…GRMV), 104-124 (GMTM…VGLS), 125-145 (IAML…VAGV), and 167-187 (ICGG…HTLL).

Belongs to the MntP (TC 9.B.29) family.

Its subcellular location is the cell inner membrane. Functionally, probably functions as a manganese efflux pump. This is Putative manganese efflux pump MntP from Citrifermentans bemidjiense (strain ATCC BAA-1014 / DSM 16622 / JCM 12645 / Bem) (Geobacter bemidjiensis).